Reading from the N-terminus, the 407-residue chain is Arrestin homolog (407 aa).

This sequence belongs to the arrestin family.

The protein is Arrestin homolog of Locusta migratoria (Migratory locust).